Consider the following 420-residue polypeptide: Putative T-box protein 33 (420 aa).

The T-box DNA-binding region spans 93-291 (LWKELHYLSN…ANPTSRGDAK (199 aa)). The span at 395-412 (SPPLQPTATSPEASQNQI) shows a compositional bias: polar residues. The interval 395–420 (SPPLQPTATSPEASQNQIKLEMNQYM) is disordered.

The protein localises to the nucleus. The protein is Putative T-box protein 33 (tbx-33) of Caenorhabditis elegans.